A 125-amino-acid polypeptide reads, in one-letter code: Small ribosomal subunit protein uS11 (125 aa).

This sequence belongs to the universal ribosomal protein uS11 family. In terms of assembly, part of the 30S ribosomal subunit. Interacts with proteins S7 and S18. Binds to IF-3.

In terms of biological role, located on the platform of the 30S subunit, it bridges several disparate RNA helices of the 16S rRNA. Forms part of the Shine-Dalgarno cleft in the 70S ribosome. The sequence is that of Small ribosomal subunit protein uS11 from Aquifex aeolicus (strain VF5).